A 312-amino-acid polypeptide reads, in one-letter code: Ribosomal protein L11 methyltransferase (312 aa).

Residues Thr-162, Gly-183, Asp-205, and Asn-248 each coordinate S-adenosyl-L-methionine.

Belongs to the methyltransferase superfamily. PrmA family.

It localises to the cytoplasm. It catalyses the reaction L-lysyl-[protein] + 3 S-adenosyl-L-methionine = N(6),N(6),N(6)-trimethyl-L-lysyl-[protein] + 3 S-adenosyl-L-homocysteine + 3 H(+). In terms of biological role, methylates ribosomal protein L11. The protein is Ribosomal protein L11 methyltransferase of Bacillus anthracis (strain A0248).